We begin with the raw amino-acid sequence, 410 residues long: Platelet-activating factor acetylhydrolase IB subunit alpha (410 aa).

Residues 1 to 38 form a required for self-association and interaction with PAFAH1B2 and PAFAH1B3 region; it reads MVLSQRQRDELNRAIADYLRSNGYEEAYSVFKKEAELD. An interaction with NDE1 region spans residues 1 to 66; the sequence is MVLSQRQRDE…SVIRLQKKVM (66 aa). The segment at 1-102 is interaction with NDEL1; the sequence is MVLSQRQRDE…EWIPRPPEKY (102 aa). Residues 7–39 enclose the LisH domain; it reads QRDELNRAIADYLRSNGYEEAYSVFKKEAELDM. N6-acetyllysine is present on lysine 53. Residues 56–82 are a coiled coil; that stretch reads TSVIRLQKKVMELESKLNEAKEEFTSG. An interaction with dynein and dynactin region spans residues 83-410; the sequence is GPLGQKRDPK…DQTVKVWECR (328 aa). WD repeat units follow at residues 106–147, 148–187, 190–229, 232–271, 274–333, 336–377, and 378–410; these read GHRS…RTLK, GHTD…CIRT, GHDH…CVKT, GHRE…CKAE, EHEH…CLMT, GHDN…KTLN, and AHEH…WECR. Serine 109 bears the Phosphoserine mark. Residues 367–409 form an interaction with DCX region; that stretch reads YKNKRCMKTLNAHEHFVTSLDFHKTAPYVVTGSVDQTVKVWEC. The interval 388–410 is interaction with NDEL1; that stretch reads FHKTAPYVVTGSVDQTVKVWECR.

Belongs to the WD repeat LIS1/nudF family. As to quaternary structure, can self-associate. Component of the cytosolic PAF-AH (I) heterotetrameric enzyme, which is composed of PAFAH1B1 (beta), PAFAH1B2 (alpha2) and PAFAH1B3 (alpha1) subunits. The catalytic activity of the enzyme resides in the alpha1 (PAFAH1B3) and alpha2 (PAFAH1B2) subunits, whereas the beta subunit (PAFAH1B1) has regulatory activity. Trimer formation is not essential for the catalytic activity. Interacts with the catalytic dimer of PAF-AH (I) heterotetrameric enzyme: interacts with PAFAH1B2 homodimer (alpha2/alpha2 homodimer), PAFAH1B3 homodimer (alpha1/alpha1 homodimer) and PAFAH1B2-PAFAH1B3 heterodimer (alpha2/alpha1 heterodimer). Interacts with DCX, dynein, dynactin, IQGAP1, KATNB1, NDE1, NDEL1, NUDC and RSN. Interacts with DISC1, and this interaction is enhanced by NDEL1. Interacts with DAB1 when DAB1 is phosphorylated in response to RELN/reelin signaling. Interacts with INTS13. Interacts with DCDC1.

Its subcellular location is the cytoplasm. It localises to the cytoskeleton. The protein resides in the microtubule organizing center. It is found in the centrosome. The protein localises to the spindle. Its subcellular location is the nucleus membrane. Regulatory subunit (beta subunit) of the cytosolic type I platelet-activating factor (PAF) acetylhydrolase (PAF-AH (I)), an enzyme that catalyzes the hydrolyze of the acetyl group at the sn-2 position of PAF and its analogs and participates in PAF inactivation. Regulates the PAF-AH (I) activity in a catalytic dimer composition-dependent manner. Positively regulates the activity of the minus-end directed microtubule motor protein dynein. May enhance dynein-mediated microtubule sliding by targeting dynein to the microtubule plus end. Required for several dynein- and microtubule-dependent processes such as the maintenance of Golgi integrity, the peripheral transport of microtubule fragments and the coupling of the nucleus and centrosome. Required during brain development for the proliferation of neuronal precursors and the migration of newly formed neurons from the ventricular/subventricular zone toward the cortical plate. Neuronal migration involves a process called nucleokinesis, whereby migrating cells extend an anterior process into which the nucleus subsequently translocates. During nucleokinesis dynein at the nuclear surface may translocate the nucleus towards the centrosome by exerting force on centrosomal microtubules. Also required for proper activation of Rho GTPases and actin polymerization at the leading edge of locomoting cerebellar neurons and postmigratory hippocampal neurons in response to calcium influx triggered via NMDA receptors. May also play a role in other forms of cell locomotion including the migration of fibroblasts during wound healing. Required for dynein recruitment to microtubule plus ends and BICD2-bound cargos. May modulate the Reelin pathway through interaction of the PAF-AH (I) catalytic dimer with VLDLR. The sequence is that of Platelet-activating factor acetylhydrolase IB subunit alpha from Sus scrofa (Pig).